Consider the following 321-residue polypeptide: Chitinase-like protein 1 (321 aa).

An N-terminal signal peptide occupies residues 1 to 26 (MVTIRSGSIVILVLLAVSFLALVANG). A disulfide bridge links cysteine 42 with cysteine 55. Asparagine 57 is a glycosylation site (N-linked (GlcNAc...) asparagine). Cysteines 157 and 167 form a disulfide. N-linked (GlcNAc...) asparagine glycans are attached at residues asparagine 208 and asparagine 244. Cysteine 267 and cysteine 304 are joined by a disulfide. A disordered region spans residues 297–321 (GPNDELSCAEQKPFNPSTVPSSSSS). Positions 310–321 (FNPSTVPSSSSS) are enriched in polar residues.

It belongs to the glycosyl hydrolase 19 family. As to expression, mostly expressed in seedlings shoots and roots, stems, and flowers, and, to a lower extent, in flowers, mature leaves and roots.

The protein localises to the secreted. No chitinase activity. Essential for normal plant growth and development. Regulates cell expansion extent and differentiation at least in roots and hypocotyls. Prevents lignin accumulation in the pith. May modulate ethylene-mediated regulation during development. Probably required to establish thermotolerance acclimation. Plays a role for controlled anisotropic cell expansion in the regulation of waving during root gravitropism and thigmotropism. Involved in the root system architecture adaptation to multiple environmental conditions such as nitrate. Contributes to salt tolerance and possibly to drought by preventing the overaccumulation of sodium ions. The protein is Chitinase-like protein 1 (CTL1) of Arabidopsis thaliana (Mouse-ear cress).